The following is a 208-amino-acid chain: FMN-dependent NADH:quinone oxidoreductase (208 aa).

FMN contacts are provided by residues S9, 15–17 (SVS), 96–99 (MYNF), and 140–143 (TRGG).

This sequence belongs to the azoreductase type 1 family. In terms of assembly, homodimer. FMN is required as a cofactor.

It carries out the reaction 2 a quinone + NADH + H(+) = 2 a 1,4-benzosemiquinone + NAD(+). It catalyses the reaction N,N-dimethyl-1,4-phenylenediamine + anthranilate + 2 NAD(+) = 2-(4-dimethylaminophenyl)diazenylbenzoate + 2 NADH + 2 H(+). Quinone reductase that provides resistance to thiol-specific stress caused by electrophilic quinones. In terms of biological role, also exhibits azoreductase activity. Catalyzes the reductive cleavage of the azo bond in aromatic azo compounds to the corresponding amines. This Azospirillum brasilense protein is FMN-dependent NADH:quinone oxidoreductase.